Reading from the N-terminus, the 617-residue chain is D-glucuronyl C5-epimerase (617 aa).

Residues 1–11 are Cytoplasmic-facing; that stretch reads MRCLAARVNYK. Residues 12–28 form a helical; Signal-anchor for type II membrane protein membrane-spanning segment; that stretch reads TLIIICALFTLVTVLLW. The Lumenal portion of the chain corresponds to 29–617; it reads NKCSSDKAIQ…YLKGSRAKHN (589 aa). Substrate contacts are provided by residues Tyr-179, 184–186, Gln-201, Tyr-209, Gln-212, and Gln-215; that span reads RDR. The Ca(2+) site is built by Thr-237, Glu-239, Thr-268, Asn-269, and Asp-392. Substrate-binding positions include 429–432, 499–500, Asn-510, Tyr-514, Tyr-560, Arg-563, and 572–581; these read KLGE, EY, and NLARWDYHTT.

It belongs to the D-glucuronyl C5-epimerase family. In terms of assembly, homodimer. Interacts with HS2ST1.

The protein resides in the golgi apparatus membrane. It catalyses the reaction [heparosan-N-sulfate](n) = [heparan-N-sulfate](n). The protein operates within glycan metabolism; heparan sulfate biosynthesis. It participates in glycan metabolism; heparin biosynthesis. Converts D-glucuronic acid residues adjacent to N-sulfate sugar residues to L-iduronic acid residues, both in maturing heparan sulfate (HS) and heparin chains. This is important for further modifications that determine the specificity of interactions between these glycosaminoglycans and proteins. This chain is D-glucuronyl C5-epimerase (GLCE), found in Bos taurus (Bovine).